We begin with the raw amino-acid sequence, 447 residues long: MTRKYFGTDGVRGKVGESPITPDFVMRLGHAAGKVLAHGASTGQGRPTVLIGKDTRISGYMLEAALEAGFTSAGVHVLLTGPLPTPGIAYLTRALRLSAGVVISASHNPYYDNGIKFFSADGDKLPDEVEAKIEAALEEPMTCAPSDDLGRARRINDAPGRYIEFCKSTFPNSQDLRGLKLVVDCAHGAAYHIAPHVFHELGADVIAIGNQPDGRNINDGYGATAPGKLIEAVREHGADLGLAFDGDADRLQVVDSEGRLYNGDELLYLIVRDRMAAGFAVEGAVGTLMTNMAVELALKRIGVEFVRAKVGDRYVLEELNKRHWTLGGEGSGHLLCLDRHSTGDGIVSALQVLAALRRSGKTLAGLLDGVSLFPQKLINVRVEKGFDWQSHAGLKAARAVVEPELAGRGRVLIRASGTEPVVRVMVEAEHAETAERAAQTLAEALRA.

Ser106 acts as the Phosphoserine intermediate in catalysis. Residues Ser106, Asp245, Asp247, and Asp249 each contribute to the Mg(2+) site. At Ser106 the chain carries Phosphoserine.

Belongs to the phosphohexose mutase family. Mg(2+) is required as a cofactor. Activated by phosphorylation.

The enzyme catalyses alpha-D-glucosamine 1-phosphate = D-glucosamine 6-phosphate. Catalyzes the conversion of glucosamine-6-phosphate to glucosamine-1-phosphate. The sequence is that of Phosphoglucosamine mutase from Cupriavidus pinatubonensis (strain JMP 134 / LMG 1197) (Cupriavidus necator (strain JMP 134)).